Consider the following 525-residue polypeptide: GMP synthase [glutamine-hydrolyzing] (525 aa).

The region spanning 8–207 (KILILDFGSQ…ALDICECEAN (200 aa)) is the Glutamine amidotransferase type-1 domain. C85 acts as the Nucleophile in catalysis. Residues H181 and E183 contribute to the active site. Residues 208–400 (WKPTSIIEDA…LGLPYDMLYR (193 aa)) enclose the GMPS ATP-PPase domain. 235 to 241 (SGGVDSS) serves as a coordination point for ATP.

As to quaternary structure, homodimer.

The enzyme catalyses XMP + L-glutamine + ATP + H2O = GMP + L-glutamate + AMP + diphosphate + 2 H(+). Its pathway is purine metabolism; GMP biosynthesis; GMP from XMP (L-Gln route): step 1/1. Its function is as follows. Catalyzes the synthesis of GMP from XMP. This Shewanella sediminis (strain HAW-EB3) protein is GMP synthase [glutamine-hydrolyzing].